Reading from the N-terminus, the 351-residue chain is DNA polymerase IV (351 aa).

The 182-residue stretch at 4-185 folds into the UmuC domain; that stretch reads IIHVDMDCFF…LPLAKIPGVG (182 aa). 2 residues coordinate Mg(2+): aspartate 8 and aspartate 103. Glutamate 104 is an active-site residue.

Belongs to the DNA polymerase type-Y family. As to quaternary structure, monomer. It depends on Mg(2+) as a cofactor.

Its subcellular location is the cytoplasm. The catalysed reaction is DNA(n) + a 2'-deoxyribonucleoside 5'-triphosphate = DNA(n+1) + diphosphate. Its function is as follows. Poorly processive, error-prone DNA polymerase involved in untargeted mutagenesis. Copies undamaged DNA at stalled replication forks, which arise in vivo from mismatched or misaligned primer ends. These misaligned primers can be extended by PolIV. Exhibits no 3'-5' exonuclease (proofreading) activity. May be involved in translesional synthesis, in conjunction with the beta clamp from PolIII. The polypeptide is DNA polymerase IV (Salmonella paratyphi B (strain ATCC BAA-1250 / SPB7)).